Reading from the N-terminus, the 540-residue chain is Pentatricopeptide repeat-containing protein At1g14470 (540 aa).

PPR repeat units lie at residues 70 to 104 (NVFVVNSMFKYFSKMDMANDVLRLYEQRSRCGIMP), 105 to 134 (DAFSFPVVIKSAGRFGILFQALVEKLGFFK), 135 to 165 (DPYVRNVIMDMYVKHESVESARKVFDQISQR), 166 to 196 (KGSDWNVMISGYWKWGNKEEACKLFDMMPEN), 197 to 227 (DVVSWTVMITGFAKVKDLENARKYFDRMPEK), 228 to 262 (SVVSWNAMLSGYAQNGFTEDALRLFNDMLRLGVRP), 263 to 297 (NETTWVIVISACSFRADPSLTRSLVKLIDEKRVRL), 298 to 328 (NCFVKTALLDMHAKCRDIQSARRIFNELGTQ), 330 to 364 (NLVTWNAMISGYTRIGDMSSARQLFDTMPKRNVVS), 365 to 395 (WNSLIAGYAHNGQAALAIEFFEDMIDYGDSK), 397 to 431 (DEVTMISVLSACGHMADLELGDCIVDYIRKNQIKL), 432 to 462 (NDSGYRSLIFMYARGGNLWEAKRVFDEMKER), 463 to 497 (DVVSYNTLFTAFAANGDGVETLNLLSKMKDEGIEP), and 498 to 528 (DRVTYTSVLTACNRAGLLKEGQRIFKSIRNP).

This sequence belongs to the PPR family. PCMP-A subfamily.

The protein is Pentatricopeptide repeat-containing protein At1g14470 (PCMP-A4) of Arabidopsis thaliana (Mouse-ear cress).